Reading from the N-terminus, the 90-residue chain is Aminoacyl carrier protein 1 (90 aa).

The Carrier domain occupies 6-84 (TDVRNRIIKL…TLERMVMTQL (79 aa)). Ser42 is modified (O-(pantetheine 4'-phosphoryl)serine).

Post-translationally, 4'-phosphopantetheine is transferred from CoA to a specific serine of the apo-form of this carrier protein.

In terms of biological role, aminoacyl carrier protein. Can be charged with L-glycine via the formation of a thioester bond between the amino acid and the 4'-phosphopantetheinyl prosthetic group, catalyzed by the bll0957 ligase. The chain is Aminoacyl carrier protein 1 from Bradyrhizobium diazoefficiens (strain JCM 10833 / BCRC 13528 / IAM 13628 / NBRC 14792 / USDA 110).